We begin with the raw amino-acid sequence, 462 residues long: L-seryl-tRNA(Sec) selenium transferase (462 aa).

The residue at position 294 (Lys294) is an N6-(pyridoxal phosphate)lysine.

This sequence belongs to the SelA family. In terms of assembly, homodecamer; pentamer of dimers. Binds only one seryl-tRNA(Sec) per dimer. It depends on pyridoxal 5'-phosphate as a cofactor.

It is found in the cytoplasm. It catalyses the reaction L-seryl-tRNA(Sec) + selenophosphate + H(+) = L-selenocysteinyl-tRNA(Sec) + phosphate. It participates in aminoacyl-tRNA biosynthesis; selenocysteinyl-tRNA(Sec) biosynthesis; selenocysteinyl-tRNA(Sec) from L-seryl-tRNA(Sec) (bacterial route): step 1/1. In terms of biological role, converts seryl-tRNA(Sec) to selenocysteinyl-tRNA(Sec) required for selenoprotein biosynthesis. In Yersinia enterocolitica serotype O:8 / biotype 1B (strain NCTC 13174 / 8081), this protein is L-seryl-tRNA(Sec) selenium transferase.